We begin with the raw amino-acid sequence, 126 residues long: Cyclin-dependent kinase 2-associated protein 2 (126 aa).

The disordered stretch occupies residues 1-48 (MSYKPIAPAPSSTPGSSTPGPGTPVPTGSVPSPSGSVPGAGAPFRPLF). Low complexity predominate over residues 9 to 43 (APSSTPGSSTPGPGTPVPTGSVPSPSGSVPGAGAP). The interval 64-106 (PPGAQGSQSTYTDLLSVIEEMGKEIRPTYAGSKSAMERLKRGI) is interaction with CDK2.

It belongs to the CDK2AP family. Component of the nucleosome remodeling and deacetylase (NuRD) repressor complex, composed of core proteins MTA1, MTA2, MTA3, RBBP4, RBBP7, HDAC1, HDAC2, MBD2, MBD3, and peripherally associated proteins CDK2AP1, CDK2AP2, GATAD2A, GATAD2B, CHD3, CHD4 and CHD5. The exact stoichiometry of the NuRD complex is unknown, and some subunits such as MBD2 and MBD3, GATAD2A and GATAD2B, and CHD3, CHD4 and CHD5 define mutually exclusive NuRD complexes. Interacts with CDK2AP1. Interacts with CDK2. Interacts with MAPK1. In terms of processing, phosphorylated by MAPK1 and CDK2. As to expression, ubiquitous.

It is found in the cytoplasm. The protein resides in the nucleus. Its function is as follows. Acts as a component of the histone deacetylase NuRD complex which participates in the remodeling of chromatin. Inhibits cell cycle G1/S phase transition by repressing CDK2 expression and activation; represses CDK2 activation by inhibiting its interaction with cyclin E and A. Plays a role in regulating the self-renewal of embryonic stem cells (ESCs) and in maintaining cell survival during terminal differentiation of ESCs. Regulates microtubule organization of metaphase II oocytes. The polypeptide is Cyclin-dependent kinase 2-associated protein 2 (CDK2AP2) (Homo sapiens (Human)).